Consider the following 318-residue polypeptide: Polyprenal reductase (318 aa).

Topologically, residues 1–11 are cytoplasmic; that stretch reads MAPWAEAEHSA. A helical transmembrane segment spans residues 12–34; it reads LNPLRAVWLTLTAAFLLTLLLQL. Topologically, residues 35–80 are lumenal; the sequence is LPPGLLPGCAIFQDLIRYGKTKCGEPSRPAACRAFDVPKRYFSHFY. Residues 81–101 traverse the membrane as a helical segment; it reads IISVLWNGFLLWCLTQSLFLG. At 102–117 the chain is on the cytoplasmic side; that stretch reads APFPSWLHGLLRILGA. The helical transmembrane segment at 118–138 threads the bilayer; that stretch reads AQFQGGELALSAFLVLVFLWL. Topologically, residues 139 to 157 are lumenal; the sequence is HSLRRLFECLYVSVFSNVM. Residues 158-178 traverse the membrane as a helical segment; the sequence is IHVVQYCFGLVYYVLVGLTVL. Over 179 to 194 the chain is Cytoplasmic; the sequence is SQVPMDGRNAYITGKN. The helical transmembrane segment at 195–215 threads the bilayer; it reads LLMQARWFHILGMMMFIWSSA. Residues 216-260 lie on the Lumenal side of the membrane; that stretch reads HQYKCHVILGNLRKNKAGVVIHCNHRIPFGDWFEYVSSPNYLAEL. The chain crosses the membrane as a helical span at residues 261-281; that stretch reads MIYVSMAVTFGFHNLTWWLVV. At 282–318 the chain is on the cytoplasmic side; the sequence is TNVFFNQALSAFLSHQFYKSKFVSYPKHRKAFLPFLF.

Belongs to the steroid 5-alpha reductase family. Polyprenal reductase subfamily. Expressed in preadipocytes (at protein level). Overexpressed in hormone-refractory prostate cancers (HRPC). Almost no or little expression in normal adult organs.

Its subcellular location is the endoplasmic reticulum membrane. It catalyses the reaction a di-trans,poly-cis-dolichal + NADP(+) = a di-trans,poly-cis-polyprenal + NADPH + H(+). It carries out the reaction a 3-oxo-5alpha-steroid + NADP(+) = a 3-oxo-Delta(4)-steroid + NADPH + H(+). The enzyme catalyses androst-4-ene-3,17-dione + NADPH + H(+) = 5alpha-androstan-3,17-dione + NADP(+). The catalysed reaction is 17beta-hydroxy-5alpha-androstan-3-one + NADP(+) = testosterone + NADPH + H(+). The protein operates within protein modification; protein glycosylation. Its function is as follows. Plays a key role in early steps of protein N-linked glycosylation by being involved in the conversion of polyprenol into dolichol. Acts as a polyprenal reductase that mediates the reduction of polyprenal into dolichal in a NADP-dependent mechanism. Dolichols are required for the synthesis of dolichol-linked monosaccharides and the oligosaccharide precursor used for N-glycosylation. Also able to convert testosterone (T) into 5-alpha-dihydrotestosterone (DHT). In Homo sapiens (Human), this protein is Polyprenal reductase.